Reading from the N-terminus, the 163-residue chain is Ubiquitin-like protein 1-ribosomal protein eS31 fusion protein (163 aa).

The Ubiquitin-like domain occupies 1–70 (MVFVKTLHRT…IYVNLELLGG (70 aa)). Gly70 is covalently cross-linked (Glycyl lysine isopeptide (Gly-Lys) (interchain with K-? in acceptor proteins)). The segment at 115-138 (CQQPSCGGGVFMAQHANRHYCGRC) adopts a C4-type zinc-finger fold.

It in the N-terminal section; belongs to the ubiquitin family. In the C-terminal section; belongs to the eukaryotic ribosomal protein eS31 family.

This is Ubiquitin-like protein 1-ribosomal protein eS31 fusion protein from Caenorhabditis elegans.